The chain runs to 355 residues: 3-dehydroquinate synthase (355 aa).

NAD(+) is bound by residues 71 to 76 (EGEERK), 105 to 109 (GVVGD), 129 to 130 (TS), Lys142, and Lys151. Zn(2+) is bound by residues Glu184, His246, and His263.

This sequence belongs to the sugar phosphate cyclases superfamily. Dehydroquinate synthase family. Co(2+) serves as cofactor. It depends on Zn(2+) as a cofactor. The cofactor is NAD(+).

It localises to the cytoplasm. The enzyme catalyses 7-phospho-2-dehydro-3-deoxy-D-arabino-heptonate = 3-dehydroquinate + phosphate. It participates in metabolic intermediate biosynthesis; chorismate biosynthesis; chorismate from D-erythrose 4-phosphate and phosphoenolpyruvate: step 2/7. Functionally, catalyzes the conversion of 3-deoxy-D-arabino-heptulosonate 7-phosphate (DAHP) to dehydroquinate (DHQ). The sequence is that of 3-dehydroquinate synthase from Streptococcus pneumoniae (strain 70585).